Consider the following 227-residue polypeptide: Cytochrome c oxidase subunit 2 (227 aa).

The Mitochondrial intermembrane portion of the chain corresponds to 1 to 14 (MAHATQVGLQDATS). The helical transmembrane segment at 15–45 (PIMEELISFHDHALMIIFLISFLVLYALFLT) threads the bilayer. At 46–59 (LTTKLTNTNITDAQ) the chain is on the mitochondrial matrix side. The helical transmembrane segment at 60–87 (EMETVWTILPAIILVLIALPSLRILYLT) threads the bilayer. Residues 88 to 227 (DEINDPSFTI…IFEMGPVFTL (140 aa)) lie on the Mitochondrial intermembrane side of the membrane. Positions 161, 196, 198, 200, 204, and 207 each coordinate Cu cation. Mg(2+) is bound at residue E198.

Belongs to the cytochrome c oxidase subunit 2 family. As to quaternary structure, component of the cytochrome c oxidase (complex IV, CIV), a multisubunit enzyme composed of 14 subunits. The complex is composed of a catalytic core of 3 subunits MT-CO1, MT-CO2 and MT-CO3, encoded in the mitochondrial DNA, and 11 supernumerary subunits COX4I, COX5A, COX5B, COX6A, COX6B, COX6C, COX7A, COX7B, COX7C, COX8 and NDUFA4, which are encoded in the nuclear genome. The complex exists as a monomer or a dimer and forms supercomplexes (SCs) in the inner mitochondrial membrane with NADH-ubiquinone oxidoreductase (complex I, CI) and ubiquinol-cytochrome c oxidoreductase (cytochrome b-c1 complex, complex III, CIII), resulting in different assemblies (supercomplex SCI(1)III(2)IV(1) and megacomplex MCI(2)III(2)IV(2)). Found in a complex with TMEM177, COA6, COX18, COX20, SCO1 and SCO2. Interacts with TMEM177 in a COX20-dependent manner. Interacts with COX20. Interacts with COX16. It depends on Cu cation as a cofactor.

It localises to the mitochondrion inner membrane. It carries out the reaction 4 Fe(II)-[cytochrome c] + O2 + 8 H(+)(in) = 4 Fe(III)-[cytochrome c] + 2 H2O + 4 H(+)(out). Component of the cytochrome c oxidase, the last enzyme in the mitochondrial electron transport chain which drives oxidative phosphorylation. The respiratory chain contains 3 multisubunit complexes succinate dehydrogenase (complex II, CII), ubiquinol-cytochrome c oxidoreductase (cytochrome b-c1 complex, complex III, CIII) and cytochrome c oxidase (complex IV, CIV), that cooperate to transfer electrons derived from NADH and succinate to molecular oxygen, creating an electrochemical gradient over the inner membrane that drives transmembrane transport and the ATP synthase. Cytochrome c oxidase is the component of the respiratory chain that catalyzes the reduction of oxygen to water. Electrons originating from reduced cytochrome c in the intermembrane space (IMS) are transferred via the dinuclear copper A center (CU(A)) of subunit 2 and heme A of subunit 1 to the active site in subunit 1, a binuclear center (BNC) formed by heme A3 and copper B (CU(B)). The BNC reduces molecular oxygen to 2 water molecules using 4 electrons from cytochrome c in the IMS and 4 protons from the mitochondrial matrix. The protein is Cytochrome c oxidase subunit 2 (MT-CO2) of Hylobates lar (Lar gibbon).